Reading from the N-terminus, the 228-residue chain is Prolactin-2B1 (228 aa).

The first 31 residues, 1-31, serve as a signal peptide directing secretion; sequence MLLSLTQMLSSRASSRLFLVSYLLLWENVVS. Disulfide bonds link Cys89–Cys194 and Cys203–Cys228.

It belongs to the somatotropin/prolactin family. Expressed specifically in placenta. Expressed at high levels in trophoblast cells from both junctional and labyrinth zones of the chorioallantoic placenta the last week of gestation.

The protein localises to the secreted. The polypeptide is Prolactin-2B1 (Prl2b1) (Mus musculus (Mouse)).